The following is a 436-amino-acid chain: 3-ketoacyl-CoA thiolase (436 aa).

The active-site Acyl-thioester intermediate is cysteine 99. Catalysis depends on proton acceptor residues histidine 392 and cysteine 422.

The protein belongs to the thiolase-like superfamily. Thiolase family. Heterotetramer of two alpha chains (FadJ) and two beta chains (FadI).

The protein localises to the cytoplasm. It catalyses the reaction an acyl-CoA + acetyl-CoA = a 3-oxoacyl-CoA + CoA. The protein operates within lipid metabolism; fatty acid beta-oxidation. In terms of biological role, catalyzes the final step of fatty acid oxidation in which acetyl-CoA is released and the CoA ester of a fatty acid two carbons shorter is formed. The chain is 3-ketoacyl-CoA thiolase from Escherichia coli O157:H7.